Consider the following 498-residue polypeptide: ATP synthase subunit beta, chloroplastic (498 aa).

172–179 (GGAGVGKT) provides a ligand contact to ATP.

This sequence belongs to the ATPase alpha/beta chains family. In terms of assembly, F-type ATPases have 2 components, CF(1) - the catalytic core - and CF(0) - the membrane proton channel. CF(1) has five subunits: alpha(3), beta(3), gamma(1), delta(1), epsilon(1). CF(0) has four main subunits: a(1), b(1), b'(1) and c(9-12).

The protein localises to the plastid. Its subcellular location is the chloroplast thylakoid membrane. The enzyme catalyses ATP + H2O + 4 H(+)(in) = ADP + phosphate + 5 H(+)(out). Its function is as follows. Produces ATP from ADP in the presence of a proton gradient across the membrane. The catalytic sites are hosted primarily by the beta subunits. The sequence is that of ATP synthase subunit beta, chloroplastic from Atropa belladonna (Belladonna).